The following is a 201-amino-acid chain: Interferon-induced transmembrane protein 10 (201 aa).

Disordered stretches follow at residues 1–23 and 60–88; these read MAQGPSQCPALLGAPASTTDGTQ and AAPAPEPSASPPMAPTLFPMESKSSKTDS. Topologically, residues 1–127 are extracellular; it reads MAQGPSQCPA…PDTTEVNDYY (127 aa). Over residues 63-73 the composition is skewed to pro residues; the sequence is APEPSASPPMA. A helical transmembrane segment spans residues 128-148; sequence LWSIFNFVYLNFCCLGFIALA. Residues Cys-140 and Cys-141 are each lipidated (S-palmitoyl cysteine). Topologically, residues 149–173 are cytoplasmic; that stretch reads YSLKVRDKKLLNDLNGAVEDAKTAR. The chain crosses the membrane as a helical span at residues 174–194; it reads LFNITSSALAASCIILIFIFL. Residues 195 to 201 lie on the Extracellular side of the membrane; that stretch reads RYPLTDY.

The protein belongs to the CD225/Dispanin family.

It localises to the cell membrane. This Mus musculus (Mouse) protein is Interferon-induced transmembrane protein 10 (Ifitm10).